The following is a 373-amino-acid chain: Eukaryotic translation initiation factor 3 subunit M (373 aa).

S2 carries the post-translational modification N-acetylserine. Residues S2 and S152 each carry the phosphoserine modification. Residues 180 to 338 (AASKVMVELL…RKVVVSHSTH (159 aa)) form the PCI domain. K253 bears the N6-acetyllysine mark. S366 carries the post-translational modification Phosphoserine.

The protein belongs to the eIF-3 subunit M family. Component of the eukaryotic translation initiation factor 3 (eIF-3) complex, which is composed of 13 subunits: EIF3A, EIF3B, EIF3C, EIF3D, EIF3E, EIF3F, EIF3G, EIF3H, EIF3I, EIF3J, EIF3K, EIF3L and EIF3M. The eIF-3 complex appears to include 3 stable modules: module A is composed of EIF3A, EIF3B, EIF3G and EIF3I; module B is composed of EIF3F, EIF3H, and EIF3M; and module C is composed of EIF3C, EIF3D, EIF3E, EIF3K and EIF3L. EIF3C of module C binds EIF3B of module A and EIF3H of module B, thereby linking the three modules. EIF3J is a labile subunit that binds to the eIF-3 complex via EIF3B. The eIF-3 complex interacts with RPS6KB1 under conditions of nutrient depletion. Mitogenic stimulation leads to binding and activation of a complex composed of MTOR and RPTOR, leading to phosphorylation and release of RPS6KB1 and binding of EIF4B to eIF-3.

Its subcellular location is the cytoplasm. Functionally, component of the eukaryotic translation initiation factor 3 (eIF-3) complex, which is required for several steps in the initiation of protein synthesis. The eIF-3 complex associates with the 40S ribosome and facilitates the recruitment of eIF-1, eIF-1A, eIF-2:GTP:methionyl-tRNAi and eIF-5 to form the 43S pre-initiation complex (43S PIC). The eIF-3 complex stimulates mRNA recruitment to the 43S PIC and scanning of the mRNA for AUG recognition. The eIF-3 complex is also required for disassembly and recycling of post-termination ribosomal complexes and subsequently prevents premature joining of the 40S and 60S ribosomal subunits prior to initiation. The eIF-3 complex specifically targets and initiates translation of a subset of mRNAs involved in cell proliferation, including cell cycling, differentiation and apoptosis, and uses different modes of RNA stem-loop binding to exert either translational activation or repression. This is Eukaryotic translation initiation factor 3 subunit M from Bos taurus (Bovine).